Consider the following 478-residue polypeptide: Elongation factor Tu, chloroplastic (478 aa).

Residues 1-29 show a composition bias toward low complexity; the sequence is MASISAATATSSTKLVSSNSTNPLLPSST. A disordered region spans residues 1–31; the sequence is MASISAATATSSTKLVSSNSTNPLLPSSTKP. Residues 1 to 69 constitute a chloroplast transit peptide; it reads MASISAATAT…THRHRRFTVR (69 aa). The tr-type G domain maps to 79-283; the sequence is KPHVNIGTIG…AVDSYIPIPV (205 aa). Residues 88–95 are G1; the sequence is GHVDHGKT. 88 to 95 serves as a coordination point for GTP; the sequence is GHVDHGKT. A G2 region spans residues 129–133; it reads GITIN. The interval 150–153 is G3; the sequence is DCPG. GTP-binding positions include 150–154 and 205–208; these read DCPGH and NKQD. Residues 205 to 208 are G4; it reads NKQD. Residues 243–245 form a G5 region; that stretch reads SAL.

Belongs to the TRAFAC class translation factor GTPase superfamily. Classic translation factor GTPase family. EF-Tu/EF-1A subfamily.

It is found in the plastid. Its subcellular location is the chloroplast. Its function is as follows. This protein promotes the GTP-dependent binding of aminoacyl-tRNA to the A-site of ribosomes during protein biosynthesis. The sequence is that of Elongation factor Tu, chloroplastic (TUFA) from Nicotiana tabacum (Common tobacco).